Reading from the N-terminus, the 309-residue chain is Isoflavone reductase homolog IRL (309 aa).

NADP(+) contacts are provided by residues 12–18 (GGTGYLG), Arg37, and Lys46. Lys134 functions as the Proton acceptor in the catalytic mechanism. Residue Arg138 participates in NADP(+) binding.

Belongs to the NmrA-type oxidoreductase family. Isoflavone reductase subfamily. As to quaternary structure, monomer.

Its subcellular location is the cytoplasm. Its pathway is alkaloid biosynthesis. Its function is as follows. Reductase that may be involved in a late step of alkaloid biosynthesis. The protein is Isoflavone reductase homolog IRL of Zea mays (Maize).